We begin with the raw amino-acid sequence, 124 residues long: Sulfiredoxin (124 aa).

The protein belongs to the sulfiredoxin family. In terms of assembly, interacts with tpx1 in response to oxidative stress.

Its subcellular location is the cytoplasm. The protein localises to the nucleus. The catalysed reaction is S-hydroxy-S-oxy-L-cysteinyl-[peroxiredoxin] + [protein]-dithiol + ATP = S-hydroxy-L-cysteinyl-[peroxiredoxin] + [protein]-disulfide + ADP + phosphate. In terms of biological role, contributes to oxidative stress resistance by reducing cysteine-sulfinic acid formed under exposure to oxidants in a peroxiredoxin. May catalyze the reduction in a multi-step process by acting both as a specific phosphotransferase and a thioltransferase. The polypeptide is Sulfiredoxin (srx1) (Schizosaccharomyces pombe (strain 972 / ATCC 24843) (Fission yeast)).